A 364-amino-acid chain; its full sequence is C3a anaphylatoxin chemotactic receptor (364 aa).

The Extracellular portion of the chain corresponds to 1 to 50 (MGDNMDFSEHYGNFSENYVTESYGEFDLYYDPLNETSLSEQGHRSIWVLS). N-linked (GlcNAc...) asparagine glycans are attached at residues N13 and N34. Residues 51–71 (IVLCSIACVLGITGNAFVIWI) form a helical membrane-spanning segment. The Cytoplasmic segment spans residues 72–82 (AGVKMKRTVNT). The chain crosses the membrane as a helical span at residues 83 to 103 (IWFVNLAAADLLCCVSIPFSI). Over 104-120 (ADIILNSHWPYGEAMCK) the chain is Extracellular. The cysteines at positions 119 and 198 are disulfide-linked. A helical membrane pass occupies residues 121–141 (ILPSMVVLNMFASVFTLVLIS). The Cytoplasmic portion of the chain corresponds to 142–159 (LDRFALVILPVWAQNHRS). A helical transmembrane segment spans residues 160–180 (ITLAWLLCGLVWVLGLLLSLP). Topologically, residues 181 to 220 (SMIYREIVVHDDMNITLCIYNHLQDKTEGNQSAIKAIHVT) are extracellular. A helical transmembrane segment spans residues 221-241 (RLILGFLIPLLVIAVCYLLIG). The Cytoplasmic portion of the chain corresponds to 242–256 (RRVSSGRFKSQRAFQ). Residues 257 to 277 (IILVVVTTFFVCWLPYHVIGL) traverse the membrane as a helical segment. Residues 278 to 295 (VIEYGKEASQVMARALDP) lie on the Extracellular side of the membrane. A helical transmembrane segment spans residues 296-316 (LAISLAYVNSCLNPVLYVFMG). Topologically, residues 317 to 364 (QDFKERVRVSLRKIFEKVFSEDVTLRSSVYSKGQSQLSRATNSSEAQV) are cytoplasmic.

It belongs to the G-protein coupled receptor 1 family.

The protein localises to the cell membrane. Its function is as follows. Receptor for the chemotactic and inflammatory peptide anaphylatoxin C3a. This receptor stimulates chemotaxis, granule enzyme release and superoxide anion production. The chain is C3a anaphylatoxin chemotactic receptor (c3ar1) from Oncorhynchus mykiss (Rainbow trout).